Reading from the N-terminus, the 90-residue chain is RNA-binding protein Hfq (90 aa).

The Sm domain occupies 11-71; sequence DVFLNSVRKT…ISTIMPAAPV (61 aa).

Belongs to the Hfq family. In terms of assembly, homohexamer.

In terms of biological role, RNA chaperone that binds small regulatory RNA (sRNAs) and mRNAs to facilitate mRNA translational regulation in response to envelope stress, environmental stress and changes in metabolite concentrations. Also binds with high specificity to tRNAs. The chain is RNA-binding protein Hfq from Maricaulis maris (strain MCS10) (Caulobacter maris).